The chain runs to 68 residues: MDQVMQFVEPSRQFVKDSIRLVKRCTKPDRKEFQKIAMATAIGFAIMGFIGFFVKLIHIPINNIIVGG.

At Met1 the chain carries N-acetylmethionine. At 1–32 (MDQVMQFVEPSRQFVKDSIRLVKRCTKPDRKE) the chain is on the cytoplasmic side. The residue at position 18 (Ser18) is a Phosphoserine. The chain crosses the membrane as a helical span at residues 33 to 61 (FQKIAMATAIGFAIMGFIGFFVKLIHIPI). Over 62–68 (NNIIVGG) the chain is Extracellular.

Belongs to the SecE/SEC61-gamma family. As to quaternary structure, the SEC61 channel-forming translocon complex consists of channel-forming core components SEC61A1, SEC61B and SEC61G and different auxiliary components such as SEC62 and SEC63. The SEC61 channel associates with the multi-pass translocon (MPT) complex.

The protein resides in the endoplasmic reticulum membrane. Its function is as follows. Component of SEC61 channel-forming translocon complex that mediates transport of signal peptide-containing precursor polypeptides across the endoplasmic reticulum (ER). Forms a ribosome receptor and a gated pore in the ER membrane, both functions required for cotranslational translocation of nascent polypeptides. The SEC61 channel is also involved in ER membrane insertion of transmembrane proteins: it mediates membrane insertion of the first few transmembrane segments of proteins, while insertion of subsequent transmembrane regions of multi-pass membrane proteins is mediated by the multi-pass translocon (MPT) complex. The SEC61 channel cooperates with the translocating protein TRAM1 to import nascent proteins into the ER. The chain is Protein transport protein Sec61 subunit gamma (SEC61G) from Bos taurus (Bovine).